Consider the following 346-residue polypeptide: Inositol 2-dehydrogenase/D-chiro-inositol 3-dehydrogenase (346 aa).

This sequence belongs to the Gfo/Idh/MocA family. In terms of assembly, homotetramer.

It carries out the reaction myo-inositol + NAD(+) = scyllo-inosose + NADH + H(+). It catalyses the reaction 1D-chiro-inositol + NAD(+) = scyllo-inosine + NADH + H(+). Its pathway is polyol metabolism; myo-inositol degradation into acetyl-CoA; acetyl-CoA from myo-inositol: step 1/7. In terms of biological role, involved in the oxidation of myo-inositol (MI) and D-chiro-inositol (DCI) to 2-keto-myo-inositol (2KMI or 2-inosose) and 1-keto-D-chiro-inositol (1KDCI), respectively. The chain is Inositol 2-dehydrogenase/D-chiro-inositol 3-dehydrogenase from Lacticaseibacillus casei (Lactobacillus casei).